We begin with the raw amino-acid sequence, 2149 residues long: Non-reducing polyketide synthase PvBS090_009107 (2149 aa).

The tract at residues 8–244 (YLFGDQTGEF…VRVPVHAPYH (237 aa)) is N-terminal acylcarrier protein transacylase domain (SAT). Positions 375 to 806 (QSKIAIIGLS…GGNTALLIED (432 aa)) constitute a Ketosynthase family 3 (KS3) domain. Active-site for beta-ketoacyl synthase activity residues include Cys-547, His-682, and His-724. The segment at 911 to 1231 (FVFTGQGAQY…LSAIYLAGVD (321 aa)) is malonyl-CoA:ACP transacylase (MAT) domain. Ser-1000 functions as the For acyl/malonyl transferase activity in the catalytic mechanism. The product template (PT) domain stretch occupies residues 1290 to 1604 (TTSVQRIVET…RQVLNTVLPP (315 aa)). Positions 1294 to 1426 (QRIVETRDEG…CLVKFSDTHL (133 aa)) are N-terminal hotdog fold. Residues 1294 to 1599 (QRIVETRDEG…FQGVPRQVLN (306 aa)) form the PKS/mFAS DH domain. His-1326 serves as the catalytic Proton acceptor; for dehydratase activity. The interval 1454 to 1599 (SHRMHRGMFY…FQGVPRQVLN (146 aa)) is C-terminal hotdog fold. The active-site Proton donor; for dehydratase activity is Asp-1512. A disordered region spans residues 1604 to 1631 (PAGGSKAAPRTTARAVPPPPINVEKPKS). Positions 1649–1726 (SAGPSVLVQA…DLKQLLSQAS (78 aa)) constitute a Carrier 1 domain. Position 1686 is an O-(pantetheine 4'-phosphoryl)serine (Ser-1686). Composition is skewed to low complexity over residues 1722 to 1731 (LSQASPSDSS) and 1744 to 1755 (SSSTEPSTPGTP). Positions 1722–1763 (LSQASPSDSSDSSEESHYSFRDSSSTEPSTPGTPAFFSPKRG) are disordered. The Carrier 2 domain maps to 1769-1846 (VGESETIKTI…AVETALDLKP (78 aa)). Ser-1806 carries the O-(pantetheine 4'-phosphoryl)serine modification. Residues 1875–2147 (STHPPATSIL…KLSAFIGRAM (273 aa)) form a thioesterase (TE) domain region. The For thioesterase activity role is filled by Ser-1965.

It catalyses the reaction 6 malonyl-CoA + acetyl-CoA + 6 H(+) = naphtopyrone YWA1 + 6 CO2 + 7 CoA + H2O. It functions in the pathway secondary metabolite biosynthesis. Its pathway is pigment biosynthesis. Functionally, non-reducing polyketide synthase; part of the gene cluster 24 that mediates the biosynthesis of a pigment with an aromatic structure protecting the pigmented fungus from both ionizing and non-ionizing radiations based on a mechanism similar to melanin, that is, free radical quenching and spherical spatial arrangement. Catalyzes the biosynthesis of the gamma-naphthopyrone precursor YWA1, via condensation of one acetyl-CoA starter unit with 6 malonyl-CoA units. YWA1 is probably further processed by the additional enzymes present within the cluster 24, however these additional steps have not been characterized yet. YWA1 is not converted to DHN-melanin in Byssochlamys spectabilis since the use of the DHN-melanin pathway inhibitor pyroquilon does not result in a loss of pigmentation. The sequence is that of Non-reducing polyketide synthase PvBS090_009107 from Byssochlamys spectabilis (Paecilomyces variotii).